The sequence spans 133 residues: ATP synthase epsilon chain, chloroplastic (133 aa).

The protein belongs to the ATPase epsilon chain family. F-type ATPases have 2 components, CF(1) - the catalytic core - and CF(0) - the membrane proton channel. CF(1) has five subunits: alpha(3), beta(3), gamma(1), delta(1), epsilon(1). CF(0) has three main subunits: a, b and c.

It is found in the plastid. The protein resides in the chloroplast thylakoid membrane. Produces ATP from ADP in the presence of a proton gradient across the membrane. This Psilotum nudum (Whisk fern) protein is ATP synthase epsilon chain, chloroplastic.